A 98-amino-acid polypeptide reads, in one-letter code: Large ribosomal subunit protein uL23 (98 aa).

This sequence belongs to the universal ribosomal protein uL23 family. In terms of assembly, part of the 50S ribosomal subunit. Contacts protein L29, and trigger factor when it is bound to the ribosome.

Its function is as follows. One of the early assembly proteins it binds 23S rRNA. One of the proteins that surrounds the polypeptide exit tunnel on the outside of the ribosome. Forms the main docking site for trigger factor binding to the ribosome. This is Large ribosomal subunit protein uL23 from Rickettsia canadensis (strain McKiel).